An 88-amino-acid chain; its full sequence is Small ribosomal subunit protein bS20 (88 aa).

The tract at residues 1-20 is disordered; that stretch reads MANIKQQKKRNKTNEKRRLR.

This sequence belongs to the bacterial ribosomal protein bS20 family.

Binds directly to 16S ribosomal RNA. The protein is Small ribosomal subunit protein bS20 of Phytoplasma australiense.